The sequence spans 342 residues: AA9 family lytic polysaccharide monooxygenase AA9-X282 (342 aa).

A signal peptide spans 1-18; the sequence is MKSFASLLFLAATAAAHA. Cu(2+) is bound at residue His-17. Phosphothreonine is present on residues Thr-19 and Thr-57. Position 59 is a phosphoserine (Ser-59). Cys-63 and Cys-181 are oxidised to a cystine. Residue His-93 coordinates Cu(2+). His-167 and Gln-176 together coordinate O2. Position 178 (Tyr-178) interacts with Cu(2+). N-linked (GlcNAc...) asparagine glycosylation is present at Asn-189. The X282 extension stretch occupies residues 233 to 263; sequence SPATVANTPYPTTATWNTALQPTTVPTVTPP. The segment at 281–302 is disordered; that stretch reads VTSQPPVPPTTQQPPVVTPTAP. Positions 285-302 are enriched in pro residues; that stretch reads PPVPPTTQQPPVVTPTAP. The 37-residue stretch at 306–342 folds into the CBM1 domain; it reads PLQTQYGQCGGQGWNGPTQCQPPYTCTASNQWYHQCL.

This sequence belongs to the polysaccharide monooxygenase AA9 family. Requires Cu(2+) as cofactor.

The protein localises to the secreted. The enzyme catalyses [(1-&gt;4)-beta-D-glucosyl]n+m + reduced acceptor + O2 = 4-dehydro-beta-D-glucosyl-[(1-&gt;4)-beta-D-glucosyl]n-1 + [(1-&gt;4)-beta-D-glucosyl]m + acceptor + H2O.. In terms of biological role, lytic polysaccharide monooxygenase (LPMO) that depolymerizes crystalline and amorphous polysaccharides via the oxidation of scissile alpha- or beta-(1-4)-glycosidic bonds, yielding C1 oxidation products. Catalysis by LPMOs requires the reduction of the active-site copper from Cu(II) to Cu(I) by a reducing agent and H(2)O(2) or O(2) as a cosubstrate. Shows only weak binding properties to cellulose, and low cellulolytic oxidative activity which questions the involvement of X282 extension-containing AA9 proteins in the degradation of plant cell wall and opens new avenues as to the divergence of function of some AA9 members. In Coprinopsis cinerea (strain Okayama-7 / 130 / ATCC MYA-4618 / FGSC 9003) (Inky cap fungus), this protein is AA9 family lytic polysaccharide monooxygenase AA9-X282.